Consider the following 2602-residue polypeptide: Filamin-B (2602 aa).

The segment at Met-1–Lys-239 is actin-binding. Calponin-homology (CH) domains follow at residues Lys-16 to Ser-122 and Gln-139 to Leu-242. Thr-216 is modified (phosphothreonine). The tract at residues Pro-244–Thr-267 is disordered. Filamin repeat units follow at residues Lys-249–Val-347, Lys-349–Ile-446, Gly-447–Val-543, Gly-544–Ile-636, Thr-640–Ile-736, Gly-737–Val-839, Asp-840–Val-938, Ala-939–Ala-1034, Ser-1035–Ile-1127, Glu-1128–Val-1222, Glu-1223–Val-1322, Thr-1323–Ser-1415, Lys-1416–Val-1511, Leu-1512–Ala-1608, and Thr-1609–Ala-1704. The residue at position 519 (Thr-519) is a Phosphothreonine. Lys-681 carries the N6-acetyllysine modification. At Ser-730 the chain carries Phosphoserine. A compositionally biased stretch (basic and acidic residues) spans Val-837–Ala-850. The segment at Val-837–Asn-862 is disordered. Ser-886, Ser-932, Ser-983, and Ser-1028 each carry phosphoserine. Phosphothreonine is present on Thr-1307. Position 1316 is a phosphoserine (Ser-1316). Residues Ser-1433, Ser-1505, and Ser-1602 each carry the phosphoserine modification. The tract at residues Thr-1705–Val-1728 is hinge 1. Filamin repeat units follow at residues Thr-1729 to Gln-1813, Val-1816 to Ile-1908, Lys-1919 to Val-1994, Ser-1997 to Ile-2089, Gly-2091 to Val-2185, Leu-2188 to Val-2280, Ala-2282 to Val-2375, and Gly-2379 to Val-2471. An N6-acetyllysine modification is found at Lys-1780. Ser-2083 and Ser-2113 each carry phosphoserine. Phosphoserine is present on residues Ser-2369 and Ser-2465. Lys-2468 participates in a covalent cross-link: Glycyl lysine isopeptide (Lys-Gly) (interchain with G-Cter in ISG15). The segment at Thr-2472–Pro-2506 is hinge 2. The segment at Thr-2472–Pro-2602 is self-association site, tail. Ser-2478, Ser-2481, and Ser-2492 each carry phosphoserine. A Filamin 24 repeat occupies Lys-2507 to Val-2601. Lys-2518 and Lys-2524 each carry N6-succinyllysine. An N6-acetyllysine modification is found at Lys-2576.

It belongs to the filamin family. As to quaternary structure, homodimer. Interacts with FLNA, FLNC, INPPL1, ITGB1A, ITGB1D, ITGB3, ITGB6, MYOT, MYOZ1, PSEN1 and PSEN2. Interacts with MICALL2. Interacts with RFLNA and RFLNB. Interacts with ASB2 isoform 1; the interaction targets FLNB for proteasomal degradation. Post-translationally, ISGylation prevents ability to interact with the upstream activators of the JNK cascade and inhibits IFNA-induced JNK signaling. In terms of processing, ubiquitination by a SCF-like complex containing ASB2 isoform 1 leads to proteasomal degradation which promotes muscle differentiation. Expressed in hippocampus, cortex, cerebellar Purkinje cells and granule cell layers.

It localises to the cytoplasm. Its subcellular location is the cell cortex. The protein resides in the cytoskeleton. The protein localises to the stress fiber. It is found in the myofibril. It localises to the sarcomere. Its subcellular location is the z line. In terms of biological role, connects cell membrane constituents to the actin cytoskeleton. May promote orthogonal branching of actin filaments and links actin filaments to membrane glycoproteins. Anchors various transmembrane proteins to the actin cytoskeleton. In Mus musculus (Mouse), this protein is Filamin-B (Flnb).